Here is a 146-residue protein sequence, read N- to C-terminus: Hemoglobin subunit beta (146 aa).

At Val-1 the chain carries N-acetylvaline. The 145-residue stretch at 2-146 (HLTPEEKVAV…VANALAHKYH (145 aa)) folds into the Globin domain. Residue Thr-12 is modified to Phosphothreonine. At Ser-44 the chain carries Phosphoserine. Lys-59 carries the N6-acetyllysine modification. Position 63 (His-63) interacts with heme b. Lys-82 is modified (N6-acetyllysine). His-92 serves as a coordination point for heme b. Position 93 is an S-nitrosocysteine (Cys-93). N6-acetyllysine is present on Lys-144.

Belongs to the globin family. As to quaternary structure, heterotetramer of two alpha chains and two beta chains. In terms of tissue distribution, red blood cells.

In terms of biological role, involved in oxygen transport from the lung to the various peripheral tissues. This is Hemoglobin subunit beta (HBB) from Cercocebus atys (Sooty mangabey).